A 284-amino-acid chain; its full sequence is 4-diphosphocytidyl-2-C-methyl-D-erythritol kinase (284 aa).

Lys-14 is an active-site residue. 98–108 (PMGGGLGGGSS) contributes to the ATP binding site. Residue Asp-140 is part of the active site.

This sequence belongs to the GHMP kinase family. IspE subfamily.

The enzyme catalyses 4-CDP-2-C-methyl-D-erythritol + ATP = 4-CDP-2-C-methyl-D-erythritol 2-phosphate + ADP + H(+). It participates in isoprenoid biosynthesis; isopentenyl diphosphate biosynthesis via DXP pathway; isopentenyl diphosphate from 1-deoxy-D-xylulose 5-phosphate: step 3/6. In terms of biological role, catalyzes the phosphorylation of the position 2 hydroxy group of 4-diphosphocytidyl-2C-methyl-D-erythritol. The protein is 4-diphosphocytidyl-2-C-methyl-D-erythritol kinase of Shewanella baltica (strain OS155 / ATCC BAA-1091).